The following is a 597-amino-acid chain: C4b-binding protein alpha chain (597 aa).

The signal sequence occupies residues M1–G48. 8 Sushi domains span residues N49–Y110, K111–I172, V173–K236, I237–P296, N297–A362, L363–D424, I425–A482, and L483–W540. Intrachain disulfides connect C50–C96, C81–C108, C113–C154, C140–C170, C175–C217, C203–C234, C239–C281, C267–C294, C299–C348, C332–C360, C365–C409, C399–C422, C426–C468, C454–C480, C484–C525, and C511–C538. An N-linked (GlcNAc...) asparagine glycan is attached at N221. Residues N506 and N528 are each glycosylated (N-linked (GlcNAc...) asparagine).

As to quaternary structure, disulfide-linked complex of alpha and beta chains of 3 possible sorts: a 570 kDa complex of 7 alpha chains and 1 beta chain, a 530 kDa homoheptamer of alpha chains or a 500 kDa complex of 6 alpha chains and 1 beta chain. The central body of the alpha chain homomer supports tentacles, each with the binding site for C4b at the end. (Microbial infection) Interacts with Staphylococcus aureus protein SdrE; this interaction inhibits complement-mediated bacterial opsonization. Chylomicrons in the plasma.

It is found in the secreted. Controls the classical pathway of complement activation. It binds as a cofactor to C3b/C4b inactivator (C3bINA), which then hydrolyzes the complement fragment C4b. It also accelerates the degradation of the C4bC2a complex (C3 convertase) by dissociating the complement fragment C2a. Alpha chain binds C4b. It also interacts with anticoagulant protein S and with serum amyloid P component. This Homo sapiens (Human) protein is C4b-binding protein alpha chain (C4BPA).